Here is a 334-residue protein sequence, read N- to C-terminus: uncharacterized protein (334 aa).

Belongs to the ADP-ribosylglycohydrolase family.

This is an uncharacterized protein from Escherichia coli (strain K12).